Here is a 757-residue protein sequence, read N- to C-terminus: 5-methyltetrahydropteroyltriglutamate--homocysteine methyltransferase (757 aa).

5-methyltetrahydropteroyltri-L-glutamate is bound by residues 17-20 (RELK) and Lys-115. L-homocysteine-binding positions include 430 to 432 (IGS) and Glu-483. L-methionine contacts are provided by residues 430–432 (IGS) and Glu-483. 5-methyltetrahydropteroyltri-L-glutamate-binding positions include 514–515 (RC) and Trp-560. Asp-598 contacts L-homocysteine. Asp-598 contacts L-methionine. A 5-methyltetrahydropteroyltri-L-glutamate-binding site is contributed by Glu-604. Residues His-640, Cys-642, and Glu-664 each contribute to the Zn(2+) site. His-693 acts as the Proton donor in catalysis. Cys-725 contacts Zn(2+).

The protein belongs to the vitamin-B12 independent methionine synthase family. The cofactor is Zn(2+).

It carries out the reaction 5-methyltetrahydropteroyltri-L-glutamate + L-homocysteine = tetrahydropteroyltri-L-glutamate + L-methionine. It participates in amino-acid biosynthesis; L-methionine biosynthesis via de novo pathway; L-methionine from L-homocysteine (MetE route): step 1/1. Its function is as follows. Catalyzes the transfer of a methyl group from 5-methyltetrahydrofolate to homocysteine resulting in methionine formation. This is 5-methyltetrahydropteroyltriglutamate--homocysteine methyltransferase from Buchnera aphidicola subsp. Schizaphis graminum (strain Sg).